Here is a 363-residue protein sequence, read N- to C-terminus: UDP-N-acetylglucosamine--N-acetylmuramyl-(pentapeptide) pyrophosphoryl-undecaprenol N-acetylglucosamine transferase (363 aa).

UDP-N-acetyl-alpha-D-glucosamine is bound by residues 13–15, Asn-125, Arg-166, Ser-195, Ile-249, 268–273, and Gln-294; these read TGG and ALTVSE.

This sequence belongs to the glycosyltransferase 28 family. MurG subfamily.

The protein localises to the cell inner membrane. The catalysed reaction is di-trans,octa-cis-undecaprenyl diphospho-N-acetyl-alpha-D-muramoyl-L-alanyl-D-glutamyl-meso-2,6-diaminopimeloyl-D-alanyl-D-alanine + UDP-N-acetyl-alpha-D-glucosamine = di-trans,octa-cis-undecaprenyl diphospho-[N-acetyl-alpha-D-glucosaminyl-(1-&gt;4)]-N-acetyl-alpha-D-muramoyl-L-alanyl-D-glutamyl-meso-2,6-diaminopimeloyl-D-alanyl-D-alanine + UDP + H(+). Its pathway is cell wall biogenesis; peptidoglycan biosynthesis. Cell wall formation. Catalyzes the transfer of a GlcNAc subunit on undecaprenyl-pyrophosphoryl-MurNAc-pentapeptide (lipid intermediate I) to form undecaprenyl-pyrophosphoryl-MurNAc-(pentapeptide)GlcNAc (lipid intermediate II). The sequence is that of UDP-N-acetylglucosamine--N-acetylmuramyl-(pentapeptide) pyrophosphoryl-undecaprenol N-acetylglucosamine transferase from Cellvibrio japonicus (strain Ueda107) (Pseudomonas fluorescens subsp. cellulosa).